We begin with the raw amino-acid sequence, 609 residues long: MRAGHETETSIMRPQYPGDDIRPTSKKELAGWYSYGWAAEVFTVCAMGSFLPITLEQMARDRGVLFSDKVTPCSATLNGPSRMSIQARWTLSSRYDAGRPTVANQCVVYIFGVEINTASFAMYTFSVSVFIQAILIISMSGAADHGSHRKLLLMAFAVIGSVSTMLFLGVVPKIYMVGAVIAIIANTCFGASFVLLNSFLPLLVRHHPSVLRSAREPRPALDDSRAQEGHSDTTNGIEHGIESNVTSPLLHARQGNGENAEADMHPATHITVSQELKVSTRISSFGIGIGYIGAIILQIVCILVVIATNQTTYSLRLVLFLIGLWWFIFSIPAALWLRSRPGPPLATTHHGKHTRSWIGYMAYSWKSLYRTAVRTRHLKDILLFLAAWLLLSDGIATVSGTAVLFAKTQLNMQPAALGLINVIAMVAGVLGAFSWGSFSRVFNLSASQTIIACILLFELVPLYGLLGFIPAIKSLGFLGLQQPWEMFPLGIVYGLVMGGLSSYCRSFFGELIPPGNEAAFYALYAITDKGSSIFGPTIVGIITDRYGEIRPAFVFLAILIFLPLPLMLLVDVERGKRDALALAAELQPSGAQTYGTLPTNEDRAPPSEL.

4 helical membrane-spanning segments follow: residues 35–55 (YGWA…PITL), 117–137 (TASF…ILII), 151–171 (LLLM…LGVV), and 176–196 (MVGA…FVLL). Residues 214-231 (AREPRPALDDSRAQEGHS) show a composition bias toward basic and acidic residues. The segment at 214–240 (AREPRPALDDSRAQEGHSDTTNGIEHG) is disordered. The N-linked (GlcNAc...) asparagine glycan is linked to Asn-244. The chain crosses the membrane as a helical span at residues 287 to 307 (IGIGYIGAIILQIVCILVVIA). An N-linked (GlcNAc...) asparagine glycan is attached at Asn-309. 3 helical membrane passes run 317 to 337 (LVLF…ALWL), 381 to 401 (ILLF…VSGT), and 415 to 435 (AALG…AFSW). Asn-443 carries an N-linked (GlcNAc...) asparagine glycan. A run of 4 helical transmembrane segments spans residues 450 to 470 (IIAC…GFIP), 477 to 497 (FLGL…GLVM), 522 to 542 (ALYA…VGII), and 552 to 572 (AFVF…LVDV).

It belongs to the ATG22 family.

The protein localises to the vacuole membrane. Functionally, vacuolar effluxer which mediate the efflux of amino acids resulting from autophagic degradation. The release of autophagic amino acids allows the maintenance of protein synthesis and viability during nitrogen starvation. This chain is Autophagy-related protein 22-1 (atg22-1), found in Aspergillus fumigatus (strain ATCC MYA-4609 / CBS 101355 / FGSC A1100 / Af293) (Neosartorya fumigata).